A 480-amino-acid chain; its full sequence is Adenosylmethionine-8-amino-7-oxononanoate aminotransferase (480 aa).

Glycine 126–serine 127 provides a ligand contact to pyridoxal 5'-phosphate. Tyrosine 160 serves as a coordination point for substrate. Position 270 (aspartate 270) interacts with pyridoxal 5'-phosphate. N6-(pyridoxal phosphate)lysine is present on lysine 314. Glycine 350 serves as a coordination point for substrate. A pyridoxal 5'-phosphate-binding site is contributed by proline 351–threonine 352. Arginine 441 contacts substrate.

It belongs to the class-III pyridoxal-phosphate-dependent aminotransferase family. BioA subfamily. The cofactor is pyridoxal 5'-phosphate.

The enzyme catalyses (8S)-8-amino-7-oxononanoate + S-adenosyl-L-methionine = S-adenosyl-4-methylsulfanyl-2-oxobutanoate + (7R,8S)-7,8-diammoniononanoate. It participates in cofactor biosynthesis; biotin biosynthesis; 7,8-diaminononanoate from 8-amino-7-oxononanoate (SAM route): step 1/1. Its function is as follows. Catalyzes the transfer of the alpha-amino group from S-adenosyl-L-methionine (SAM) to 7-keto-8-aminopelargonic acid (KAPA) to form 7,8-diaminopelargonic acid (DAPA). It is the only aminotransferase known to utilize SAM as an amino donor. This Saccharomyces cerevisiae (strain ATCC 204508 / S288c) (Baker's yeast) protein is Adenosylmethionine-8-amino-7-oxononanoate aminotransferase.